Here is a 466-residue protein sequence, read N- to C-terminus: Asparagine--tRNA ligase (466 aa).

Belongs to the class-II aminoacyl-tRNA synthetase family. Homodimer.

It localises to the cytoplasm. It carries out the reaction tRNA(Asn) + L-asparagine + ATP = L-asparaginyl-tRNA(Asn) + AMP + diphosphate + H(+). The sequence is that of Asparagine--tRNA ligase from Salmonella typhimurium (strain LT2 / SGSC1412 / ATCC 700720).